The primary structure comprises 211 residues: 3-demethoxyubiquinol 3-hydroxylase (211 aa).

Residues Glu-60, Glu-90, His-93, Glu-142, Glu-174, and His-177 each contribute to the Fe cation site.

This sequence belongs to the COQ7 family. Requires Fe cation as cofactor.

It is found in the cell membrane. It catalyses the reaction a 5-methoxy-2-methyl-3-(all-trans-polyprenyl)benzene-1,4-diol + AH2 + O2 = a 3-demethylubiquinol + A + H2O. Its pathway is cofactor biosynthesis; ubiquinone biosynthesis. In terms of biological role, catalyzes the hydroxylation of 2-nonaprenyl-3-methyl-6-methoxy-1,4-benzoquinol during ubiquinone biosynthesis. This is 3-demethoxyubiquinol 3-hydroxylase from Herminiimonas arsenicoxydans.